Here is a 518-residue protein sequence, read N- to C-terminus: Apolipoprotein N-acyltransferase (518 aa).

6 consecutive transmembrane segments (helical) span residues 22-42 (LAFI…LWII), 63-83 (FFHW…WVHV), 101-121 (ALLA…LAWF), 134-154 (LLFP…LTGF), 174-194 (IIGA…LALC), and 202-222 (LLIL…LSQI). In terms of domain architecture, CN hydrolase spans 234 to 484 (VQGNIPQSMK…TGVLSATIPL (251 aa)). Catalysis depends on glutamate 273, which acts as the Proton acceptor. Lysine 343 is a catalytic residue. Cysteine 395 (nucleophile) is an active-site residue. Residues 492–512 (AKIGQTPLLILCGALLLVGFI) traverse the membrane as a helical segment.

Belongs to the CN hydrolase family. Apolipoprotein N-acyltransferase subfamily.

Its subcellular location is the cell inner membrane. It catalyses the reaction N-terminal S-1,2-diacyl-sn-glyceryl-L-cysteinyl-[lipoprotein] + a glycerophospholipid = N-acyl-S-1,2-diacyl-sn-glyceryl-L-cysteinyl-[lipoprotein] + a 2-acyl-sn-glycero-3-phospholipid + H(+). The protein operates within protein modification; lipoprotein biosynthesis (N-acyl transfer). In terms of biological role, catalyzes the phospholipid dependent N-acylation of the N-terminal cysteine of apolipoprotein, the last step in lipoprotein maturation. This is Apolipoprotein N-acyltransferase from Shewanella oneidensis (strain ATCC 700550 / JCM 31522 / CIP 106686 / LMG 19005 / NCIMB 14063 / MR-1).